A 1306-amino-acid chain; its full sequence is Activating transcription factor 7-interacting protein 1 (1306 aa).

Met-1 is modified (N-acetylmethionine). A disordered region spans residues 1–23 (MDSVEEPQKKVFKARKTMRASDR). Residue Lys-33 forms a Glycyl lysine isopeptide (Lys-Gly) (interchain with G-Cter in SUMO2) linkage. Phosphoserine occurs at positions 57 and 112. 7 disordered regions span residues 104–470 (EDLN…SMET), 496–604 (LPVE…SKRR), 689–722 (AAKD…NNMT), 765–785 (VVSS…PAAP), 871–895 (PLPN…NSST), 920–1060 (RTSL…GPSQ), and 1152–1196 (AGPQ…STSL). 2 stretches are compositionally biased toward polar residues: residues 109–134 (EALS…SPAS) and 143–162 (VSDN…SDNP). Thr-124 is subject to Phosphothreonine. Low complexity-rich tracts occupy residues 185–212 (EEPP…CSEP), 246–261 (EAAS…ASDE), and 284–303 (PSGD…LPRS). Residues 432-441 (QSEKDEHKSP) are compositionally biased toward basic and acidic residues. 4 positions are modified to phosphoserine: Ser-511, Ser-514, Ser-516, and Ser-533. A compositionally biased stretch (polar residues) spans 513-523 (GSPSKQESSEN). Basic and acidic residues-rich tracts occupy residues 557-566 (EGEKSEKDGK), 592-601 (KSEDMDSVES), and 689-699 (AAKDDLKKRQE). The short motif at 587 to 605 (RRKRSKSEDMDSVESKRRR) is the Nuclear localization signal element. Residue Lys-592 forms a Glycyl lysine isopeptide (Lys-Gly) (interchain with G-Cter in SUMO2) linkage. Ser-593 is subject to Phosphoserine. An interaction with SETDB1 region spans residues 596–851 (MDSVESKRRR…NQPSGNVEFI (256 aa)). Residues 666 to 696 (NKRHKAVLTELQAKIARLTKRFGAAKDDLKK) are a coiled coil. Ser-700 and Ser-707 each carry phosphoserine. Residues 713–722 (NDTNSNNNMT) are compositionally biased toward polar residues. The segment covering 871–884 (PLPNPTKPNIPSVP) has biased composition (pro residues). Ser-933 is modified (phosphoserine). Glycyl lysine isopeptide (Lys-Gly) (interchain with G-Cter in SUMO2) cross-links involve residues Lys-944 and Lys-974. Residues 948 to 981 (STFSPPSSAEQNSSATPRIVTENQTNKTVDSSIN) are compositionally biased toward polar residues. Over residues 987-1000 (STSQSGKASSSDSS) the composition is skewed to low complexity. Residues 1001–1011 (GVIDLTMDDEE) are interaction with SUMO. A compositionally biased stretch (low complexity) spans 1022–1040 (SPPSSSTVSTSQPMSRPLQ). The 90-residue stretch at 1054 to 1143 (PTSGPSQATI…RVPQTTTYVV (90 aa)) folds into the Fibronectin type-III 1 domain. Positions 1170–1187 (PRPLHPAPLPEAPQPQRL) are enriched in pro residues. An interaction with MBD1 region spans residues 1190–1306 (EAASTSLPQK…TDVISSSQNS (117 aa)). The 107-residue stretch at 1196 to 1302 (LPQKPHLKLA…DPQSTDVISS (107 aa)) folds into the Fibronectin type-III 2 domain.

It belongs to the MCAF family. In terms of assembly, interacts with MBD1; the interaction is enhanced when MBD1 is sumoylated. Interacts with SETDB1; the interaction protects SETDB1 from proteasomal degradation and is required to stimulate histone methyltransferase activity and facilitate the conversion of dimethylated to trimethylated H3 'Lys-9'. Interacts with SUMO ubiquitin-like proteins (SUMO1, SUNO2 and SUMO3), with a preference for SUMO2 and SUMO3. Interacts with SP1, ATF7 and ZHX1. Interacts with the general transcription machinery, including ERCC2, ERCC3, GTF2E1, GTF2E2 and POLR2A. Ubiquitously expressed at all stages studied.

Its subcellular location is the nucleus. Functionally, recruiter that couples transcriptional factors to general transcription apparatus and thereby modulates transcription regulation and chromatin formation. Can both act as an activator or a repressor depending on the context. Required for HUSH-mediated heterochromatin formation and gene silencing. Mediates MBD1-dependent transcriptional repression, probably by recruiting complexes containing SETDB1. Stabilizes SETDB1, is required to stimulate histone methyltransferase activity of SETDB1 and facilitates the conversion of dimethylated to trimethylated H3 'Lys-9' (H3K9me3). The complex formed with MBD1 and SETDB1 represses transcription and couples DNA methylation and histone H3 'Lys-9' trimethylation (H3K9me3). Facilitates telomerase TERT and TERC gene expression by SP1 in cancer cells. The chain is Activating transcription factor 7-interacting protein 1 (Atf7ip) from Mus musculus (Mouse).